Here is a 134-residue protein sequence, read N- to C-terminus: ATP synthase epsilon chain (134 aa).

The protein belongs to the ATPase epsilon chain family. F-type ATPases have 2 components, CF(1) - the catalytic core - and CF(0) - the membrane proton channel. CF(1) has five subunits: alpha(3), beta(3), gamma(1), delta(1), epsilon(1). CF(0) has three main subunits: a, b and c.

It is found in the cell inner membrane. In terms of biological role, produces ATP from ADP in the presence of a proton gradient across the membrane. The chain is ATP synthase epsilon chain from Nitratidesulfovibrio vulgaris (strain ATCC 29579 / DSM 644 / CCUG 34227 / NCIMB 8303 / VKM B-1760 / Hildenborough) (Desulfovibrio vulgaris).